A 503-amino-acid polypeptide reads, in one-letter code: Probable cytosol aminopeptidase (503 aa).

Mn(2+) is bound by residues Lys274 and Asp279. Residue Lys286 is part of the active site. Asp297, Asp356, and Glu358 together coordinate Mn(2+). Arg360 is a catalytic residue.

This sequence belongs to the peptidase M17 family. It depends on Mn(2+) as a cofactor.

It localises to the cytoplasm. It catalyses the reaction Release of an N-terminal amino acid, Xaa-|-Yaa-, in which Xaa is preferably Leu, but may be other amino acids including Pro although not Arg or Lys, and Yaa may be Pro. Amino acid amides and methyl esters are also readily hydrolyzed, but rates on arylamides are exceedingly low.. It carries out the reaction Release of an N-terminal amino acid, preferentially leucine, but not glutamic or aspartic acids.. In terms of biological role, presumably involved in the processing and regular turnover of intracellular proteins. Catalyzes the removal of unsubstituted N-terminal amino acids from various peptides. The chain is Probable cytosol aminopeptidase from Burkholderia pseudomallei (strain 1106a).